Reading from the N-terminus, the 196-residue chain is MADS-box transcription factor 32 (196 aa).

The MADS-box domain occupies 1 to 61 (MGRGRSEIKR…GKLYHFLSPT (61 aa)). Residues 85 to 175 (RQERRAELEK…CDKIAHAQTL (91 aa)) enclose the K-box domain.

It localises to the nucleus. Its function is as follows. Probable transcription factor. In Oryza sativa subsp. japonica (Rice), this protein is MADS-box transcription factor 32 (MADS32).